The following is a 273-amino-acid chain: 3-methyl-2-oxobutanoate hydroxymethyltransferase (273 aa).

Aspartate 49 and aspartate 88 together coordinate Mg(2+). Residues 49–50 (DS), aspartate 88, and lysine 118 contribute to the 3-methyl-2-oxobutanoate site. Glutamate 120 is a binding site for Mg(2+). Glutamate 187 serves as the catalytic Proton acceptor.

Belongs to the PanB family. As to quaternary structure, homodecamer; pentamer of dimers. Mg(2+) serves as cofactor.

Its subcellular location is the cytoplasm. It catalyses the reaction 3-methyl-2-oxobutanoate + (6R)-5,10-methylene-5,6,7,8-tetrahydrofolate + H2O = 2-dehydropantoate + (6S)-5,6,7,8-tetrahydrofolate. It participates in cofactor biosynthesis; (R)-pantothenate biosynthesis; (R)-pantoate from 3-methyl-2-oxobutanoate: step 1/2. In terms of biological role, catalyzes the reversible reaction in which hydroxymethyl group from 5,10-methylenetetrahydrofolate is transferred onto alpha-ketoisovalerate to form ketopantoate. In Rhizobium rhizogenes (strain K84 / ATCC BAA-868) (Agrobacterium radiobacter), this protein is 3-methyl-2-oxobutanoate hydroxymethyltransferase.